A 124-amino-acid chain; its full sequence is Small ribosomal subunit protein uS13 (124 aa).

Residues 89 to 124 are disordered; it reads GRRHRQGLPVRGQRTKTNARTRKGPKRTVAGKKKAK. The segment covering 101 to 124 has biased composition (basic residues); the sequence is QRTKTNARTRKGPKRTVAGKKKAK.

It belongs to the universal ribosomal protein uS13 family. Part of the 30S ribosomal subunit. Forms a loose heterodimer with protein S19. Forms two bridges to the 50S subunit in the 70S ribosome.

Functionally, located at the top of the head of the 30S subunit, it contacts several helices of the 16S rRNA. In the 70S ribosome it contacts the 23S rRNA (bridge B1a) and protein L5 of the 50S subunit (bridge B1b), connecting the 2 subunits; these bridges are implicated in subunit movement. Contacts the tRNAs in the A and P-sites. This is Small ribosomal subunit protein uS13 from Nocardioides sp. (strain ATCC BAA-499 / JS614).